The primary structure comprises 122 residues: Beta-2-microglobulin (122 aa).

The N-terminal stretch at 1-22 is a signal peptide; that stretch reads MMARIFILALLGQLCFLPYLDA. Positions 27–115 constitute an Ig-like C1-type domain; sequence PKVQVYSRHP…HLTLQEPKVV (89 aa). An intrachain disulfide couples C47 to C102.

Belongs to the beta-2-microglobulin family. In terms of assembly, heterodimer of an alpha chain and a beta chain. Beta-2-microglobulin is the beta-chain of major histocompatibility complex class I molecules.

The protein localises to the secreted. In terms of biological role, component of the class I major histocompatibility complex (MHC). Involved in the presentation of peptide antigens to the immune system. In Trichosurus vulpecula (Brush-tailed possum), this protein is Beta-2-microglobulin (B2M).